An 807-amino-acid polypeptide reads, in one-letter code: SWI/SNF complex subunit SWI3C (807 aa).

The disordered stretch occupies residues 1–74 (MPASEDRRGK…DPGLGIGEVV (74 aa)). Residues 28 to 54 (EEEDMEEEDEENNNNNNEEMDDVENAD) are compositionally biased toward acidic residues. The SWIRM domain occupies 176–274 (HVLPMHSDWF…YCATAQSHPG (99 aa)). Residues 340–394 (LCDSHCNHCSRPLPTVYFQSQKKGDILLCCDCFHHGRFVVGHSCLDFVRVDPMKF) form a ZZ-type; degenerate zinc finger. 4 residues coordinate Zn(2+): Cys-345, Cys-348, Cys-368, and Cys-371. The region spanning 398 to 449 (QDGDNWTDQETLLLLEAVELYNENWVQIADHVGSKSKAQCILHFLRLPVEDG) is the SANT domain. Composition is skewed to polar residues over residues 458 to 467 (GVTNTENPTN) and 552 to 569 (ENQQ…NGAE). 2 disordered regions span residues 458-487 (GVTN…SEQG) and 549-571 (LDGE…AEAQ). The stretch at 598-656 (ADHEEREIQRLSANIVNHQLKRMELKLKQFAEIETLLMKECEQVEKTRQRFSAERARML) forms a coiled coil. 2 stretches are compositionally biased toward low complexity: residues 692 to 703 (QHQQQQASATSQ) and 726 to 739 (QQQQ…QQQQ). 3 disordered regions span residues 692-713 (QHQQ…FSNN), 721-740 (HFMA…QQQA), and 781-807 (SINQ…LGLN). A compositionally biased stretch (gly residues) spans 798–807 (SGSGSGLGLN).

Heterodimer. Interacts with SWI3A, SWI3B and BRM, but not with BSH. Interacts with MORC6 and SUVH9. In terms of tissue distribution, expressed in roots, stems, leaves, flowers and siliques.

It is found in the nucleus. Its function is as follows. Component of a multiprotein complex equivalent of the SWI/SNF complex, an ATP-dependent chromatin-remodeling complex, which is required for the positive and negative regulation of gene expression of a large number of genes. It changes chromatin structure by altering DNA-histone contacts within a nucleosome, leading eventually to a change in nucleosome position, thus facilitating or repressing binding of gene-specific transcription factors. The polypeptide is SWI/SNF complex subunit SWI3C (SWI3C) (Arabidopsis thaliana (Mouse-ear cress)).